The chain runs to 213 residues: Large ribosomal subunit protein uL3 (213 aa).

Belongs to the universal ribosomal protein uL3 family. In terms of assembly, part of the 50S ribosomal subunit. Forms a cluster with proteins L14 and L19.

In terms of biological role, one of the primary rRNA binding proteins, it binds directly near the 3'-end of the 23S rRNA, where it nucleates assembly of the 50S subunit. The sequence is that of Large ribosomal subunit protein uL3 from Kosmotoga olearia (strain ATCC BAA-1733 / DSM 21960 / TBF 19.5.1).